A 265-amino-acid polypeptide reads, in one-letter code: Mycothiol acetyltransferase (265 aa).

2 consecutive N-acetyltransferase domains span residues 1 to 110 (MDDL…PPLP) and 118 to 265 (VSVR…YVRG). Aspartate 3 lines the 1D-myo-inositol 2-(L-cysteinylamino)-2-deoxy-alpha-D-glucopyranoside pocket. Residue 44 to 46 (VQV) participates in acetyl-CoA binding. 1D-myo-inositol 2-(L-cysteinylamino)-2-deoxy-alpha-D-glucopyranoside contacts are provided by glutamate 145, arginine 185, and glutamate 198. Acetyl-CoA is bound by residues 202 to 204 (LGV) and 209 to 215 (HCKGLGK). Tyrosine 236 is a 1D-myo-inositol 2-(L-cysteinylamino)-2-deoxy-alpha-D-glucopyranoside binding site.

It belongs to the acetyltransferase family. MshD subfamily. Monomer.

The enzyme catalyses 1D-myo-inositol 2-(L-cysteinylamino)-2-deoxy-alpha-D-glucopyranoside + acetyl-CoA = mycothiol + CoA + H(+). Functionally, catalyzes the transfer of acetyl from acetyl-CoA to desacetylmycothiol (Cys-GlcN-Ins) to form mycothiol. This Segniliparus rotundus (strain ATCC BAA-972 / CDC 1076 / CIP 108378 / DSM 44985 / JCM 13578) protein is Mycothiol acetyltransferase.